Reading from the N-terminus, the 344-residue chain is L-rhamnose-proton symporter (344 aa).

10 consecutive transmembrane segments (helical) span residues 4 to 24 (AITM…CFYA), 38 to 58 (WSVG…ALLL), 68 to 88 (FNLS…IGNI), 101 to 121 (MGIG…TPII), 131 to 151 (TEGG…VGIV), 175 to 195 (LLLA…MNAA), 214 to 234 (LPSY…FCFI), 259 to 279 (ILLS…YAWG), 290 to 310 (MSWM…GLVL), and 321 to 341 (VAVL…VGLG).

This sequence belongs to the L-rhamnose transporter (TC 2.A.7.6) family.

The protein resides in the cell inner membrane. The catalysed reaction is L-rhamnopyranose(in) + H(+)(in) = L-rhamnopyranose(out) + H(+)(out). In terms of biological role, uptake of L-rhamnose across the cytoplasmic membrane with the concomitant transport of protons into the cell (symport system). The protein is L-rhamnose-proton symporter of Salmonella typhi.